We begin with the raw amino-acid sequence, 455 residues long: Phosphoglucosamine mutase (455 aa).

The active-site Phosphoserine intermediate is Ser-104. Residues Ser-104, Asp-243, Asp-245, and Asp-247 each contribute to the Mg(2+) site. Ser-104 is modified (phosphoserine).

The protein belongs to the phosphohexose mutase family. The cofactor is Mg(2+). Activated by phosphorylation.

It carries out the reaction alpha-D-glucosamine 1-phosphate = D-glucosamine 6-phosphate. In terms of biological role, catalyzes the conversion of glucosamine-6-phosphate to glucosamine-1-phosphate. The polypeptide is Phosphoglucosamine mutase (Synechococcus sp. (strain CC9311)).